The chain runs to 327 residues: Phenylalanine--tRNA ligase alpha subunit (327 aa).

Glutamate 252 provides a ligand contact to Mg(2+).

This sequence belongs to the class-II aminoacyl-tRNA synthetase family. Phe-tRNA synthetase alpha subunit type 1 subfamily. In terms of assembly, tetramer of two alpha and two beta subunits. It depends on Mg(2+) as a cofactor.

The protein localises to the cytoplasm. It catalyses the reaction tRNA(Phe) + L-phenylalanine + ATP = L-phenylalanyl-tRNA(Phe) + AMP + diphosphate + H(+). The protein is Phenylalanine--tRNA ligase alpha subunit of Shewanella frigidimarina (strain NCIMB 400).